A 143-amino-acid polypeptide reads, in one-letter code: Transcription antitermination protein NusB (143 aa).

The protein belongs to the NusB family.

In terms of biological role, involved in transcription antitermination. Required for transcription of ribosomal RNA (rRNA) genes. Binds specifically to the boxA antiterminator sequence of the ribosomal RNA (rrn) operons. This chain is Transcription antitermination protein NusB, found in Dehalococcoides mccartyi (strain CBDB1).